A 269-amino-acid polypeptide reads, in one-letter code: RBPJ-interacting and tubulin-associated protein 1 (269 aa).

Residues Val5–Leu17 carry the Nuclear export signal motif. Disordered stretches follow at residues Val66–His105 and Leu141–Lys269. Residues Cys80–Leu92 are compositionally biased toward polar residues. The Nuclear localization signal signature appears at Leu92 to Ser108. Positions Arg128–Pro156 are interaction with RBPJ/RBPSUH. The interval Pro156–Lys269 is interaction with tubulin. Over residues His200 to Ser253 the composition is skewed to polar residues.

This sequence belongs to the RITA family. In terms of assembly, interacts with RBPJ/RBPSUH.

It is found in the cytoplasm. It localises to the nucleus. Its subcellular location is the cytoskeleton. The protein resides in the microtubule organizing center. The protein localises to the centrosome. Functionally, tubulin-binding protein that acts as a negative regulator of Notch signaling pathway. Shuttles between the cytoplasm and the nucleus and mediates the nuclear export of RBPJ/RBPSUH, thereby preventing the interaction between RBPJ/RBPSUH and NICD product of Notch proteins (Notch intracellular domain), leading to down-regulate Notch-mediated transcription. May play a role in neurogenesis. The chain is RBPJ-interacting and tubulin-associated protein 1 (RITA1) from Homo sapiens (Human).